A 263-amino-acid polypeptide reads, in one-letter code: MSLNPVIFSIGPVSIYWYSLAYVLGIVFAYWYLHKLDDQKIFTKNFYDSLLTATIVGIILGGRLGYVLIYDPVLYISNPIEILKTWEGGMSFHGGAIGVLLAVIISCKRHNIPTFYALDLVSCGVPIGLFLGRIGNFINGELFGRVTTMPWGMVFPESGDNLLHHPSQLYEALFEGLLLFAVANSLFFLTRIRLYHGALTGIAVMWYGIARFFVEFFREPDYQIGYLWLDLTMGQLLSIPMVLLGMLVYLGALNLKFNTKSVT.

The next 4 membrane-spanning stretches (helical) occupy residues 6 to 26 (VIFSIGPVSIYWYSLAYVLGI), 50 to 70 (LLTATIVGIILGGRLGYVLIY), 85 to 105 (TWEGGMSFHGGAIGVLLAVII), and 112 to 132 (IPTFYALDLVSCGVPIGLFLG). Residue R133 coordinates a 1,2-diacyl-sn-glycero-3-phospho-(1'-sn-glycerol). 3 consecutive transmembrane segments (helical) span residues 169–189 (LYEALFEGLLLFAVANSLFFL), 197–217 (GALTGIAVMWYGIARFFVEFF), and 233–253 (MGQLLSIPMVLLGMLVYLGAL).

It belongs to the Lgt family.

Its subcellular location is the cell membrane. The enzyme catalyses L-cysteinyl-[prolipoprotein] + a 1,2-diacyl-sn-glycero-3-phospho-(1'-sn-glycerol) = an S-1,2-diacyl-sn-glyceryl-L-cysteinyl-[prolipoprotein] + sn-glycerol 1-phosphate + H(+). The protein operates within protein modification; lipoprotein biosynthesis (diacylglyceryl transfer). Functionally, catalyzes the transfer of the diacylglyceryl group from phosphatidylglycerol to the sulfhydryl group of the N-terminal cysteine of a prolipoprotein, the first step in the formation of mature lipoproteins. The chain is Phosphatidylglycerol--prolipoprotein diacylglyceryl transferase from Wolbachia pipientis wMel.